Reading from the N-terminus, the 580-residue chain is Arginine--tRNA ligase (580 aa).

Residues 131–141 carry the 'HIGH' region motif; it reads ANPTGPMHVGH.

The protein belongs to the class-I aminoacyl-tRNA synthetase family. Monomer.

It is found in the cytoplasm. The catalysed reaction is tRNA(Arg) + L-arginine + ATP = L-arginyl-tRNA(Arg) + AMP + diphosphate. In Cereibacter sphaeroides (strain ATCC 17029 / ATH 2.4.9) (Rhodobacter sphaeroides), this protein is Arginine--tRNA ligase.